The sequence spans 152 residues: Deoxyuridine 5'-triphosphate nucleotidohydrolase (152 aa).

Residues 71–73 (RSG), Asn84, 88–90 (LID), and Lys98 each bind substrate.

Belongs to the dUTPase family. The cofactor is Mg(2+).

It catalyses the reaction dUTP + H2O = dUMP + diphosphate + H(+). The protein operates within pyrimidine metabolism; dUMP biosynthesis; dUMP from dCTP (dUTP route): step 2/2. Its function is as follows. This enzyme is involved in nucleotide metabolism: it produces dUMP, the immediate precursor of thymidine nucleotides and it decreases the intracellular concentration of dUTP so that uracil cannot be incorporated into DNA. The polypeptide is Deoxyuridine 5'-triphosphate nucleotidohydrolase (Legionella pneumophila subsp. pneumophila (strain Philadelphia 1 / ATCC 33152 / DSM 7513)).